The primary structure comprises 360 residues: Lipid-A-disaccharide synthase (360 aa).

It belongs to the LpxB family.

It catalyses the reaction a lipid X + a UDP-2-N,3-O-bis[(3R)-3-hydroxyacyl]-alpha-D-glucosamine = a lipid A disaccharide + UDP + H(+). The protein operates within bacterial outer membrane biogenesis; LPS lipid A biosynthesis. Functionally, condensation of UDP-2,3-diacylglucosamine and 2,3-diacylglucosamine-1-phosphate to form lipid A disaccharide, a precursor of lipid A, a phosphorylated glycolipid that anchors the lipopolysaccharide to the outer membrane of the cell. In Helicobacter pylori (strain HPAG1), this protein is Lipid-A-disaccharide synthase.